We begin with the raw amino-acid sequence, 209 residues long: Chloramphenicol acetyltransferase (209 aa).

Residue H189 is the Proton acceptor of the active site.

The protein belongs to the chloramphenicol acetyltransferase family. As to quaternary structure, homotrimer.

The enzyme catalyses chloramphenicol + acetyl-CoA = chloramphenicol 3-acetate + CoA. This enzyme is an effector of chloramphenicol resistance in bacteria. The polypeptide is Chloramphenicol acetyltransferase (Staphylococcus aureus).